Consider the following 93-residue polypeptide: Conidiation-specific protein 6 (93 aa).

The disordered stretch occupies residues M1–E93. 2 repeat units span residues K7–L37 and K59–L89. The 2 X 30 AA approximate repeats stretch occupies residues K7–L89. Basic and acidic residues-rich tracts occupy residues E27–L37 and V77–E93.

Belongs to the UPF0654 (con-6) family.

Its function is as follows. May protect dormant spores from desiccation and play a significant role in the formation or survival of microconidia and ascospores. This chain is Conidiation-specific protein 6 (con-6), found in Neurospora crassa (strain ATCC 24698 / 74-OR23-1A / CBS 708.71 / DSM 1257 / FGSC 987).